Consider the following 197-residue polypeptide: Peptidyl-tRNA hydrolase (197 aa).

Tyrosine 18 is a binding site for tRNA. Histidine 23 (proton acceptor) is an active-site residue. Positions 68, 70, and 116 each coordinate tRNA.

This sequence belongs to the PTH family. Monomer.

The protein resides in the cytoplasm. The catalysed reaction is an N-acyl-L-alpha-aminoacyl-tRNA + H2O = an N-acyl-L-amino acid + a tRNA + H(+). Functionally, hydrolyzes ribosome-free peptidyl-tRNAs (with 1 or more amino acids incorporated), which drop off the ribosome during protein synthesis, or as a result of ribosome stalling. In terms of biological role, catalyzes the release of premature peptidyl moieties from peptidyl-tRNA molecules trapped in stalled 50S ribosomal subunits, and thus maintains levels of free tRNAs and 50S ribosomes. The sequence is that of Peptidyl-tRNA hydrolase from Desulfotalea psychrophila (strain LSv54 / DSM 12343).